The following is a 185-amino-acid chain: Ribosome-recycling factor (185 aa).

The protein belongs to the RRF family.

It is found in the cytoplasm. Responsible for the release of ribosomes from messenger RNA at the termination of protein biosynthesis. May increase the efficiency of translation by recycling ribosomes from one round of translation to another. The polypeptide is Ribosome-recycling factor (Shewanella pealeana (strain ATCC 700345 / ANG-SQ1)).